The chain runs to 382 residues: Alpha-2B adrenergic receptor (382 aa).

Residues 1-25 form a helical membrane-spanning segment; sequence AIAAVITFLILFTIFGNALVILAVL. Residues 26-36 are Cytoplasmic-facing; the sequence is TSRSLRAPQNL. A helical membrane pass occupies residues 37–62; the sequence is FLVSLAAADILVATLIIPFSLANELL. The Extracellular portion of the chain corresponds to 63-72; sequence GYWYFRHTWC. A disulfide bridge connects residues cysteine 72 and cysteine 151. A helical membrane pass occupies residues 73–95; that stretch reads EVYLALDVLFCTSSIVHLCAISL. The Cytoplasmic portion of the chain corresponds to 96-117; sequence DRYWSVSRALEYNSKRTPRRIK. Residues 118-140 form a helical membrane-spanning segment; it reads GIILTVWLIAAFISLPPLIYKGD. Topologically, residues 141–156 are extracellular; the sequence is KGKKPGGRPQCKLNEE. The chain crosses the membrane as a helical span at residues 157–180; it reads AWYILSSSIGSFFAPCLIMILVYL. Over 181-346 the chain is Cytoplasmic; the sequence is RIYLIAKRRN…MNREKRFTFV (166 aa). The segment at 192–305 is disordered; sequence QGPHGKQAPG…QGTPNFQPSQ (114 aa). Over residues 271-284 the composition is skewed to acidic residues; the sequence is EEEEEEEEEEEEEC. Residues 291–305 are compositionally biased toward polar residues; it reads TSSSLQGTPNFQPSQ. A helical transmembrane segment spans residues 347–370; it reads LAVVIGVFVLCWFPFFFSYSLGAI. At 371 to 379 the chain is on the extracellular side; that stretch reads CPQHCKVPH. Residues 380-382 form a helical membrane-spanning segment; the sequence is GLF.

The protein belongs to the G-protein coupled receptor 1 family. Adrenergic receptor subfamily. ADRA2B sub-subfamily. Interacts with RAB26. Interacts with PPP1R9B. Interacts with GGA1, GGA2 and GGA3.

Its subcellular location is the cell membrane. Its function is as follows. Alpha-2 adrenergic receptors mediate the catecholamine-induced inhibition of adenylate cyclase through the action of G proteins. The chain is Alpha-2B adrenergic receptor (ADRA2B) from Didelphis virginiana (North American opossum).